A 705-amino-acid chain; its full sequence is Frizzled-4 (705 aa).

An N-terminal signal peptide occupies residues 1–22 (MKPTCILCLLVVILLHPRISKS). A compositionally biased stretch (low complexity) spans 21-37 (KSSTSGNPSASSSSSSP). The disordered stretch occupies residues 21–40 (KSSTSGNPSASSSSSSPPEI). Over 23–233 (STSGNPSASS…FTPAEKHLAE (211 aa)) the chain is Extracellular. The FZ domain maps to 41–163 (PAFRQCETIR…NNHETMCMEG (123 aa)). 5 disulfide bridges follow: Cys46/Cys107, Cys54/Cys100, Cys91/Cys130, Cys119/Cys160, and Cys123/Cys147. Residue Asn60 is glycosylated (N-linked (GlcNAc...) asparagine). The chain crosses the membrane as a helical span at residues 234–254 (IWVSTWAYAALGLALVATVCL). At 255 to 270 (LASDGSRLASAKWSRL) the chain is on the cytoplasmic side. Residues 271–291 (LSPLIWCHNMVTLGWAVRFMV) form a helical membrane-spanning segment. Topologically, residues 292-322 (GRTGTACGTDPQAPNESLLTVDGLSNASCAS) are extracellular. Residues Asn306 and Asn317 are each glycosylated (N-linked (GlcNAc...) asparagine). The chain crosses the membrane as a helical span at residues 323-343 (VFLMRYYFGMAACAWWAVLCL). Residues 344–386 (GWHRDIRRHSPDSKGHVVIPSNFGGSPAKRNSAKTAQQDLTQN) lie on the Cytoplasmic side of the membrane. A helical transmembrane segment spans residues 387–407 (NFVCFVAWGLPAFQTSAVIVA). The Extracellular portion of the chain corresponds to 408 to 430 (RFVDADELLGACFVGNQSDKALQ). N-linked (GlcNAc...) asparagine glycosylation occurs at Asn423. The chain crosses the membrane as a helical span at residues 431-451 (ILVATPVFCYWIFGSMNLISG). The Cytoplasmic segment spans residues 452–483 (YLVHCRTKEILRNSNALSVQQQLQQLSAHSSS). The helical transmembrane segment at 484–504 (GIGIFLFIYGLACAMLLLAVI) threads the bilayer. Topologically, residues 505–529 (YEFANIDVWLGSGDTNTPLWPFLLR) are extracellular. The chain crosses the membrane as a helical span at residues 530-550 (AFMELMLGICCFAWVLGPSIS). The Cytoplasmic segment spans residues 551–705 (TLYKRQVSNG…LQQYGNETLL (155 aa)). The tract at residues 635 to 681 (RSVHHQQRHSPHHHHHQQQQHHQFHPHHNHQHHSTSSHRLYYPPGSY) is disordered. The span at 636-670 (SVHHQQRHSPHHHHHQQQQHHQFHPHHNHQHHSTS) shows a compositional bias: basic residues. The PDZ-binding motif lies at 703–705 (TLL).

Belongs to the G-protein coupled receptor Fz/Smo family.

It is found in the membrane. Receptor for Wnt proteins. Most of frizzled receptors are coupled to the beta-catenin canonical signaling pathway, which leads to the activation of disheveled proteins, inhibition of GSK-3 kinase, nuclear accumulation of beta-catenin and activation of Wnt target genes. A second signaling pathway involving PKC and calcium fluxes has been seen for some family members, but it is not yet clear if it represents a distinct pathway or if it can be integrated in the canonical pathway, as PKC seems to be required for Wnt-mediated inactivation of GSK-3 kinase. Both pathways seem to involve interactions with G-proteins. May be involved in transduction and intercellular transmission of polarity information during tissue morphogenesis and/or in differentiated tissues. Required to coordinate the cytoskeletons of epidermal cells to produce a parallel array of cuticular hairs and bristles. The chain is Frizzled-4 (fz4) from Drosophila melanogaster (Fruit fly).